The chain runs to 227 residues: Orotidine 5'-phosphate decarboxylase (227 aa).

Substrate contacts are provided by residues Asp-12, Lys-34, 61–70 (DLKLHDIPNT), Thr-117, Arg-178, Gln-187, Gly-207, and Arg-208. Lys-63 acts as the Proton donor in catalysis.

The protein belongs to the OMP decarboxylase family. Type 1 subfamily. Homodimer.

It catalyses the reaction orotidine 5'-phosphate + H(+) = UMP + CO2. It participates in pyrimidine metabolism; UMP biosynthesis via de novo pathway; UMP from orotate: step 2/2. In terms of biological role, catalyzes the decarboxylation of orotidine 5'-monophosphate (OMP) to uridine 5'-monophosphate (UMP). The protein is Orotidine 5'-phosphate decarboxylase of Anaeromyxobacter dehalogenans (strain 2CP-1 / ATCC BAA-258).